The sequence spans 186 residues: Tumor necrosis factor alpha-induced protein 8-like protein 2 (186 aa).

This sequence belongs to the TNFAIP8 family. TNFAIP8L2 subfamily.

Functionally, acts as a negative regulator of innate and adaptive immunity by maintaining immune homeostasis. Negative regulator of Toll-like receptor and T-cell receptor function. Prevents hyperresponsiveness of the immune system and maintains immune homeostasis. Inhibits jun/ap1 and NF-kappa-B activation. Promotes Fas-induced apoptosis. This Xenopus laevis (African clawed frog) protein is Tumor necrosis factor alpha-induced protein 8-like protein 2 (tnfaip8l2).